Here is a 235-residue protein sequence, read N- to C-terminus: tRNA (guanine-N(1)-)-methyltransferase (235 aa).

Residues Gly114 and 134–139 (IGDYIL) contribute to the S-adenosyl-L-methionine site.

Belongs to the RNA methyltransferase TrmD family. In terms of assembly, homodimer.

It is found in the cytoplasm. The enzyme catalyses guanosine(37) in tRNA + S-adenosyl-L-methionine = N(1)-methylguanosine(37) in tRNA + S-adenosyl-L-homocysteine + H(+). In terms of biological role, specifically methylates guanosine-37 in various tRNAs. The sequence is that of tRNA (guanine-N(1)-)-methyltransferase from Ehrlichia ruminantium (strain Gardel).